The primary structure comprises 250 residues: Small ribosomal subunit protein uS5 (250 aa).

Residues 1–22 (MNVVETSSEMNSNVEKASTPKQ) are compositionally biased toward polar residues. The tract at residues 1-40 (MNVVETSSEMNSNVEKASTPKQENNKRFERKSRPSSRQKV) is disordered. The S5 DRBM domain maps to 45–108 (FEEKVVTIRR…KEAKKNLVSV (64 aa)).

Belongs to the universal ribosomal protein uS5 family. Part of the 30S ribosomal subunit. Contacts proteins S4 and S8.

In terms of biological role, with S4 and S12 plays an important role in translational accuracy. Located at the back of the 30S subunit body where it stabilizes the conformation of the head with respect to the body. The polypeptide is Small ribosomal subunit protein uS5 (Mycoplasma capricolum subsp. capricolum (strain California kid / ATCC 27343 / NCTC 10154)).